We begin with the raw amino-acid sequence, 415 residues long: 2-oxoadipate dioxygenase/decarboxylase (415 aa).

The 2-oxoadipate site is built by histidine 66, arginine 70, and histidine 225. A Fe(2+)-binding site is contributed by histidine 66. Fe(2+)-binding residues include histidine 225 and glutamate 296. Position 361 (alanine 361) interacts with 2-oxoadipate.

This sequence belongs to the 2-oxoadipate dioxygenase/decarboxylase family. Fe(2+) serves as cofactor.

It catalyses the reaction 2-oxoadipate + O2 = (R)-2-hydroxyglutarate + CO2. Its function is as follows. Catalyzes the decarboxylation and hydroxylation of 2-oxoadipate (2OA) to form D-2-hydroxyglutarate (D-2-HGA). This is 2-oxoadipate dioxygenase/decarboxylase from Mycobacterium bovis (strain ATCC BAA-935 / AF2122/97).